A 474-amino-acid polypeptide reads, in one-letter code: 3-isopropylmalate dehydratase large subunit (474 aa).

[4Fe-4S] cluster is bound by residues Cys-355, Cys-415, and Cys-418.

This sequence belongs to the aconitase/IPM isomerase family. LeuC type 1 subfamily. In terms of assembly, heterodimer of LeuC and LeuD. [4Fe-4S] cluster is required as a cofactor.

It catalyses the reaction (2R,3S)-3-isopropylmalate = (2S)-2-isopropylmalate. Its pathway is amino-acid biosynthesis; L-leucine biosynthesis; L-leucine from 3-methyl-2-oxobutanoate: step 2/4. Functionally, catalyzes the isomerization between 2-isopropylmalate and 3-isopropylmalate, via the formation of 2-isopropylmaleate. The chain is 3-isopropylmalate dehydratase large subunit from Shewanella sp. (strain ANA-3).